Consider the following 106-residue polypeptide: Tapetal oleosin GRP-19 (106 aa).

The next 3 helical transmembrane spans lie at 14–34 (ALAL…ACII), 37–57 (PLFV…TLLA), and 58–78 (SGFT…SWLY). The tract at residues 84–106 (RDLPKIPGLTPPAPASNPAGSGV) is disordered.

This sequence belongs to the oleosin family. Proteolytically cleaved following anther tapetal breakdown. Present in pollen (at protein level). Inflorescence-specific expression, especially in flowers florets.

The protein resides in the secreted. It is found in the extracellular space. Its subcellular location is the extracellular matrix. It localises to the pollen coat. The protein localises to the lipid droplet. The protein resides in the membrane. Functionally, lipid-binding oleosin involved in anther tapetum development, especially for the physiology of tapetosomes. Also implicated in the formation of pollen coat. The polypeptide is Tapetal oleosin GRP-19 (Arabidopsis thaliana (Mouse-ear cress)).